We begin with the raw amino-acid sequence, 220 residues long: Tumor protein p53-inducible nuclear protein 2 (220 aa).

Residues M1–T12 are compositionally biased toward low complexity. 3 disordered regions span residues M1 to A24, P41 to E69, and P119 to Y220. Phosphoserine is present on S14. The short motif at V26–P41 is the LIR element. Over residues P47 to P64 the composition is skewed to pro residues. Residue S136 is modified to Phosphoserine. The span at H152 to R170 shows a compositional bias: low complexity. The segment covering N205–Y220 has biased composition (polar residues).

Interacts with VMP1, GABARAP, GABARAPL1, GABARAPL2, MAP1LC3A, MAP1LC3B, MAP1LC3C and THRA.

The protein resides in the cytoplasm. The protein localises to the cytosol. It localises to the nucleus. Its subcellular location is the PML body. It is found in the cytoplasmic vesicle. The protein resides in the autophagosome. Functionally, dual regulator of transcription and autophagy. Positively regulates autophagy and is required for autophagosome formation and processing. May act as a scaffold protein that recruits MAP1LC3A, GABARAP and GABARAPL2 and brings them to the autophagosome membrane by interacting with VMP1 where, in cooperation with the BECN1-PI3-kinase class III complex, they trigger autophagosome development. Acts as a transcriptional activator of THRA. The polypeptide is Tumor protein p53-inducible nuclear protein 2 (TP53INP2) (Homo sapiens (Human)).